Here is a 446-residue protein sequence, read N- to C-terminus: N-succinylarginine dihydrolase (446 aa).

Substrate contacts are provided by residues 19-28, Asn110, and 137-138; these read AGLSFGNVAS and HR. Glu174 is a catalytic residue. Substrate is bound at residue Arg213. Residue His249 is part of the active site. 2 residues coordinate substrate: Asp251 and Asn364. The active-site Nucleophile is Cys370.

It belongs to the succinylarginine dihydrolase family. In terms of assembly, homodimer.

It carries out the reaction N(2)-succinyl-L-arginine + 2 H2O + 2 H(+) = N(2)-succinyl-L-ornithine + 2 NH4(+) + CO2. It participates in amino-acid degradation; L-arginine degradation via AST pathway; L-glutamate and succinate from L-arginine: step 2/5. Catalyzes the hydrolysis of N(2)-succinylarginine into N(2)-succinylornithine, ammonia and CO(2). This Burkholderia lata (strain ATCC 17760 / DSM 23089 / LMG 22485 / NCIMB 9086 / R18194 / 383) protein is N-succinylarginine dihydrolase.